A 273-amino-acid chain; its full sequence is 4-hydroxy-tetrahydrodipicolinate reductase (273 aa).

NAD(+) contacts are provided by residues Gly12 to Met17 and Glu38. Arg39 provides a ligand contact to NADP(+). NAD(+)-binding positions include Gly102–Thr104 and Ala126–Phe129. The Proton donor/acceptor role is filled by His159. Position 160 (His160) interacts with (S)-2,3,4,5-tetrahydrodipicolinate. The active-site Proton donor is Lys163. A (S)-2,3,4,5-tetrahydrodipicolinate-binding site is contributed by Gly169–Thr170.

Belongs to the DapB family. Homotetramer.

The protein resides in the cytoplasm. It carries out the reaction (S)-2,3,4,5-tetrahydrodipicolinate + NAD(+) + H2O = (2S,4S)-4-hydroxy-2,3,4,5-tetrahydrodipicolinate + NADH + H(+). The enzyme catalyses (S)-2,3,4,5-tetrahydrodipicolinate + NADP(+) + H2O = (2S,4S)-4-hydroxy-2,3,4,5-tetrahydrodipicolinate + NADPH + H(+). Its pathway is amino-acid biosynthesis; L-lysine biosynthesis via DAP pathway; (S)-tetrahydrodipicolinate from L-aspartate: step 4/4. In terms of biological role, catalyzes the conversion of 4-hydroxy-tetrahydrodipicolinate (HTPA) to tetrahydrodipicolinate. The sequence is that of 4-hydroxy-tetrahydrodipicolinate reductase from Photorhabdus laumondii subsp. laumondii (strain DSM 15139 / CIP 105565 / TT01) (Photorhabdus luminescens subsp. laumondii).